Here is a 431-residue protein sequence, read N- to C-terminus: UPF0597 protein TDE_2144 (431 aa).

This sequence belongs to the UPF0597 family.

This Treponema denticola (strain ATCC 35405 / DSM 14222 / CIP 103919 / JCM 8153 / KCTC 15104) protein is UPF0597 protein TDE_2144.